The chain runs to 120 residues: Probable non-functional immunoglobulin kappa variable 2D-24 (120 aa).

Residues 1-19 (MRLLAQLLGLLMLWVPGSS) form the signal peptide. The Ig-like domain maps to 20–120 (GDIVMTQTPL…YYCTQATQFP (101 aa)). Residues 21–43 (DIVMTQTPLSSPVTLGQPASISF) form a framework-1 region. The interval 44-59 (RSSQSLVHSDGNTYLS) is complementarity-determining-1. The interval 60–74 (WLQQRPGQPPRLLIY) is framework-2. Positions 75 to 81 (KVSNRFS) are complementarity-determining-2. Residues 82–113 (GVPDRFSGSGAGTDFTLKISRVEAEDVGVYYC) are framework-3. The segment at 114–120 (TQATQFP) is complementarity-determining-3.

Most probably, the immunoglobulin is not assembled due to incorrect folding of light chain. Immunoglobulins are composed of two identical heavy chains and two identical light chains; disulfide-linked.

It localises to the secreted. It is found in the cell membrane. Functionally, probable non-functional open reading frame (ORF) of V region of the variable domain of immunoglobulin light chains. Non-functional ORF generally cannot participate in the synthesis of a productive immunoglobulin chain due to altered V-(D)-J or switch recombination and/or splicing site (at mRNA level) and/or conserved amino acid change (protein level). Immunoglobulins, also known as antibodies, are membrane-bound or secreted glycoproteins produced by B lymphocytes. In the recognition phase of humoral immunity, the membrane-bound immunoglobulins serve as receptors which, upon binding of a specific antigen, trigger the clonal expansion and differentiation of B lymphocytes into immunoglobulins-secreting plasma cells. Secreted immunoglobulins mediate the effector phase of humoral immunity, which results in the elimination of bound antigens. The antigen binding site is formed by the variable domain of one heavy chain, together with that of its associated light chain. Thus, each immunoglobulin has two antigen binding sites with remarkable affinity for a particular antigen. The variable domains are assembled by a process called V-(D)-J rearrangement and can then be subjected to somatic hypermutations which, after exposure to antigen and selection, allow affinity maturation for a particular antigen. This is Probable non-functional immunoglobulin kappa variable 2D-24 from Homo sapiens (Human).